The chain runs to 151 residues: D-aminoacyl-tRNA deacylase (151 aa).

The Gly-cisPro motif, important for rejection of L-amino acids motif lies at 136–137 (GP).

It belongs to the DTD family. Homodimer.

The protein resides in the cytoplasm. It catalyses the reaction glycyl-tRNA(Ala) + H2O = tRNA(Ala) + glycine + H(+). The catalysed reaction is a D-aminoacyl-tRNA + H2O = a tRNA + a D-alpha-amino acid + H(+). In terms of biological role, an aminoacyl-tRNA editing enzyme that deacylates mischarged D-aminoacyl-tRNAs. Also deacylates mischarged glycyl-tRNA(Ala), protecting cells against glycine mischarging by AlaRS. Acts via tRNA-based rather than protein-based catalysis; rejects L-amino acids rather than detecting D-amino acids in the active site. By recycling D-aminoacyl-tRNA to D-amino acids and free tRNA molecules, this enzyme counteracts the toxicity associated with the formation of D-aminoacyl-tRNA entities in vivo and helps enforce protein L-homochirality. This chain is D-aminoacyl-tRNA deacylase, found in Streptococcus gordonii (strain Challis / ATCC 35105 / BCRC 15272 / CH1 / DL1 / V288).